The following is a 159-amino-acid chain: SsrA-binding protein (159 aa).

This sequence belongs to the SmpB family.

It is found in the cytoplasm. Its function is as follows. Required for rescue of stalled ribosomes mediated by trans-translation. Binds to transfer-messenger RNA (tmRNA), required for stable association of tmRNA with ribosomes. tmRNA and SmpB together mimic tRNA shape, replacing the anticodon stem-loop with SmpB. tmRNA is encoded by the ssrA gene; the 2 termini fold to resemble tRNA(Ala) and it encodes a 'tag peptide', a short internal open reading frame. During trans-translation Ala-aminoacylated tmRNA acts like a tRNA, entering the A-site of stalled ribosomes, displacing the stalled mRNA. The ribosome then switches to translate the ORF on the tmRNA; the nascent peptide is terminated with the 'tag peptide' encoded by the tmRNA and targeted for degradation. The ribosome is freed to recommence translation, which seems to be the essential function of trans-translation. The sequence is that of SsrA-binding protein from Coxiella burnetii (strain RSA 331 / Henzerling II).